The following is a 396-amino-acid chain: 1-deoxy-D-xylulose 5-phosphate reductoisomerase (396 aa).

Thr-15, Gly-16, Ser-17, Ile-18, Gly-41, and Asn-130 together coordinate NADPH. Lys-131 lines the 1-deoxy-D-xylulose 5-phosphate pocket. Glu-132 serves as a coordination point for NADPH. Asp-155 provides a ligand contact to Mn(2+). The 1-deoxy-D-xylulose 5-phosphate site is built by Ser-156, Glu-157, Ser-181, and His-204. Residue Glu-157 coordinates Mn(2+). Gly-210 serves as a coordination point for NADPH. Positions 217, 222, 223, and 226 each coordinate 1-deoxy-D-xylulose 5-phosphate. Glu-226 provides a ligand contact to Mn(2+).

This sequence belongs to the DXR family. The cofactor is Mg(2+). Requires Mn(2+) as cofactor.

It catalyses the reaction 2-C-methyl-D-erythritol 4-phosphate + NADP(+) = 1-deoxy-D-xylulose 5-phosphate + NADPH + H(+). The protein operates within isoprenoid biosynthesis; isopentenyl diphosphate biosynthesis via DXP pathway; isopentenyl diphosphate from 1-deoxy-D-xylulose 5-phosphate: step 1/6. Its function is as follows. Catalyzes the NADPH-dependent rearrangement and reduction of 1-deoxy-D-xylulose-5-phosphate (DXP) to 2-C-methyl-D-erythritol 4-phosphate (MEP). This Bifidobacterium longum subsp. infantis (strain ATCC 15697 / DSM 20088 / JCM 1222 / NCTC 11817 / S12) protein is 1-deoxy-D-xylulose 5-phosphate reductoisomerase.